Consider the following 649-residue polypeptide: V-type ATP synthase subunit I (649 aa).

Helical transmembrane passes span 312 to 332 (FLSF…GLIF), 360 to 380 (FMIL…FFGV), 455 to 475 (DNIL…LGML), 485 to 505 (IGWV…LQAV), 520 to 540 (GQVG…GGII), 556 to 576 (VFSD…GAMV), and 593 to 613 (VLII…GGVI).

The protein belongs to the V-ATPase 116 kDa subunit family.

It is found in the cell membrane. Produces ATP from ADP in the presence of a proton gradient across the membrane. This is V-type ATP synthase subunit I (atpI) from Chlamydia muridarum (strain MoPn / Nigg).